The chain runs to 247 residues: Carboxy-S-adenosyl-L-methionine synthase (247 aa).

S-adenosyl-L-methionine-binding positions include tyrosine 39, 64–66 (GCS), 89–90 (DN), 117–118 (DI), asparagine 132, and arginine 199.

This sequence belongs to the class I-like SAM-binding methyltransferase superfamily. Cx-SAM synthase family. Homodimer.

It carries out the reaction prephenate + S-adenosyl-L-methionine = carboxy-S-adenosyl-L-methionine + 3-phenylpyruvate + H2O. Its function is as follows. Catalyzes the conversion of S-adenosyl-L-methionine (SAM) to carboxy-S-adenosyl-L-methionine (Cx-SAM). The chain is Carboxy-S-adenosyl-L-methionine synthase from Salmonella enteritidis PT4 (strain P125109).